The following is a 286-amino-acid chain: MLGRAQRTLKRKVCYSGVGVHFGKAAMLTLEPAEENTGVVFSRHAASEQYIPARLANVCGTGRSTTLSLDGSVISTVEHLLASLYSFGVDNVRIYCSEDEIPIGDGSAQVFMDLIDQAGIQEQEQTVQIARLAHPVYYQYQDTILAAFPSDEFKISYTLHYSHNSTIGTQYRSLVISEESFRKEIAPCRTFALYSELCFLMEKGLIGGGCVGNAVLFKDDGVISLGKLRFPDEPVRHKILDLIGDLSLVGTPFLAHVIAVGSGHSSNIALGNRILEALQHEQELVK.

The Zn(2+) site is built by H79, H237, and D241. The active-site Proton donor is H264.

This sequence belongs to the LpxC family. Zn(2+) is required as a cofactor.

The enzyme catalyses a UDP-3-O-[(3R)-3-hydroxyacyl]-N-acetyl-alpha-D-glucosamine + H2O = a UDP-3-O-[(3R)-3-hydroxyacyl]-alpha-D-glucosamine + acetate. Its pathway is glycolipid biosynthesis; lipid IV(A) biosynthesis; lipid IV(A) from (3R)-3-hydroxytetradecanoyl-[acyl-carrier-protein] and UDP-N-acetyl-alpha-D-glucosamine: step 2/6. Catalyzes the hydrolysis of UDP-3-O-myristoyl-N-acetylglucosamine to form UDP-3-O-myristoylglucosamine and acetate, the committed step in lipid A biosynthesis. The chain is UDP-3-O-acyl-N-acetylglucosamine deacetylase from Chlamydia trachomatis serovar L2 (strain ATCC VR-902B / DSM 19102 / 434/Bu).